Consider the following 180-residue polypeptide: Oligoribonuclease (180 aa).

The Exonuclease domain maps to 7-170; sequence LIWIDLEMTG…DDIRESIAEL (164 aa). Tyr-128 is an active-site residue.

This sequence belongs to the oligoribonuclease family.

It localises to the cytoplasm. In terms of biological role, 3'-to-5' exoribonuclease specific for small oligoribonucleotides. This Pseudomonas putida (strain ATCC 700007 / DSM 6899 / JCM 31910 / BCRC 17059 / LMG 24140 / F1) protein is Oligoribonuclease.